The following is a 310-amino-acid chain: MTAFARFLGEKVERYIDLRHSLGYAFSKQAGTLRAFVRYVERAQFDAPATRTMALDFVLSFGGAANSRATRHGVLRRFYEYLAVYDAQTEALKRRAFPRSRAIPPPRILSEAELASLIDACARISPGIPLRGLTMATLIGLLASSGLRSGEVVRLDRSDVDLTNGVLLVRKTKFRKDRLVPVHATTQTALCRYARERDAAFPSPKDQAFFLSSRGNRLSATGLQCGFAQVRKFAGLDDGKTLRPHDLRHRFAVTRMSLWHQQRANVQALLPVLATYLGHANYSDTAYYLTGSVDLLAMAAERAFLDGGAA.

One can recognise a Core-binding (CB) domain in the interval 6-83 (RFLGEKVERY…VLRRFYEYLA (78 aa)). One can recognise a Tyr recombinase domain in the interval 104–301 (PPPRILSEAE…SVDLLAMAAE (198 aa)). Residues Arg-148, Lys-173, His-245, Arg-248, and His-279 contribute to the active site. Residue Tyr-288 is the O-(3'-phospho-DNA)-tyrosine intermediate of the active site.

This sequence belongs to the 'phage' integrase family.

The chain is Putative integrase/recombinase y4rE from Sinorhizobium fredii (strain NBRC 101917 / NGR234).